Reading from the N-terminus, the 187-residue chain is MASLGSGNWSGVPTQSTAPMPWVTILQPFPWTVPSSQPQHNRVKEDLLELMMLQNAQMHQLLLGQLVADALNPGPEWPSPPVHTDSHEEQMEEEMEMQEQEPLVYHHHYLPCPVTPLGPMSLWPASFLPVPPHQPPWQGEPRIQHQPPASRQEEVRDVPPPPPPSATGTVGADVPPASDYYDAESLP.

A disordered region spans residues 133-187 (HQPPWQGEPRIQHQPPASRQEEVRDVPPPPPPSATGTVGADVPPASDYYDAESLP).

This is Proline-rich protein 29 (Prr29) from Mus musculus (Mouse).